Reading from the N-terminus, the 381-residue chain is Beta-lactamase CMY-4 (381 aa).

An N-terminal signal peptide occupies residues Met1 to Ala20. Ser84 serves as the catalytic Acyl-ester intermediate. A beta-lactam-binding residues include Ser84, Gln140, Tyr170, and Asn172.

This sequence belongs to the class-C beta-lactamase family.

The enzyme catalyses a beta-lactam + H2O = a substituted beta-amino acid. Class C beta-lactamase which confers resistance to penicillins and cephalosporins. The protein is Beta-lactamase CMY-4 of Klebsiella pneumoniae.